We begin with the raw amino-acid sequence, 198 residues long: Thymidine kinase (198 aa).

Residues 16–23 and 89–92 contribute to the ATP site; these read GGMYSGKS and EEGQ. The active-site Proton acceptor is the Glu-90. 4 residues coordinate Zn(2+): Cys-146, Cys-149, Cys-184, and Cys-187.

This sequence belongs to the thymidine kinase family. Homotetramer.

The protein resides in the cytoplasm. It carries out the reaction thymidine + ATP = dTMP + ADP + H(+). The protein is Thymidine kinase of Dictyoglomus thermophilum (strain ATCC 35947 / DSM 3960 / H-6-12).